The primary structure comprises 137 residues: Hemoglobin subunit alpha-2 (137 aa).

The 137-residue stretch at 1–137 (DDRSHILAIW…VGGSLTSKYR (137 aa)) folds into the Globin domain. His54 contributes to the O2 binding site. His83 provides a ligand contact to heme b.

The protein belongs to the globin family. In terms of processing, the N-terminus of the mature protein is acetylated. In terms of tissue distribution, red blood cells.

In Telmatobius peruvianus (Andean frog), this protein is Hemoglobin subunit alpha-2.